Consider the following 303-residue polypeptide: Deoxyhypusine hydroxylase (303 aa).

2 HEAT-like PBS-type repeats span residues 56–82 (LKHE…VLQD) and 89–115 (VRHE…YAQD). Residues His-58, His-91, and Glu-92 each coordinate Fe cation. The tract at residues 139 to 158 (DSPDTNPYLSVDPAPPAEEK) is disordered. HEAT-like PBS-type repeat units follow at residues 176–202 (HRYR…GLQI), 207–233 (FRHE…ALER), and 240–266 (VRHE…HVGD). His-209, His-242, and Glu-243 together coordinate Fe cation.

Belongs to the deoxyhypusine hydroxylase family. The cofactor is Fe(2+).

It catalyses the reaction [eIF5A protein]-deoxyhypusine + AH2 + O2 = [eIF5A protein]-hypusine + A + H2O. It functions in the pathway protein modification; eIF5A hypusination. Catalyzes the hydroxylation of the N(6)-(4-aminobutyl)-L-lysine intermediate produced by deoxyhypusine synthase/DHPS on a critical lysine of the eukaryotic translation initiation factor 5A/eIF-5A. This is the second step of the post-translational modification of that lysine into an unusual amino acid residue named hypusine. Hypusination is unique to mature eIF-5A factor and is essential for its function. The chain is Deoxyhypusine hydroxylase (dohh) from Xenopus laevis (African clawed frog).